Here is a 212-residue protein sequence, read N- to C-terminus: uncharacterized protein (212 aa).

Disordered stretches follow at residues 1–148 and 168–190; these read MEKD…LNDL and EVVT…LSED. Positions 61–70 are enriched in basic and acidic residues; it reads KELESEDQGK. Residues 71 to 85 are compositionally biased toward polar residues; the sequence is DPSSNAEDASCQKNL. Basic and acidic residues-rich tracts occupy residues 99–115, 124–144, and 168–180; these read LGHE…KSDL, EGEH…ESIK, and EVVT…EKPS.

This is an uncharacterized protein from Homo sapiens (Human).